The sequence spans 295 residues: Histamine N-methyltransferase (295 aa).

Position 28 (Glu28) interacts with substrate. 5 residues coordinate S-adenosyl-L-methionine: Gly60, Glu89, Gln94, Ser120, and Ile143. Substrate is bound at residue Asn284.

Belongs to the class I-like SAM-binding methyltransferase superfamily. HNMT family. In terms of assembly, monomer.

It is found in the cytoplasm. It carries out the reaction histamine + S-adenosyl-L-methionine = N(tau)-methylhistamine + S-adenosyl-L-homocysteine + H(+). Functionally, inactivates histamine by N-methylation. Plays an important role in degrading histamine and in regulating the airway response to histamine. The polypeptide is Histamine N-methyltransferase (Hnmt) (Mus musculus (Mouse)).